The chain runs to 398 residues: Elongation factor Tu (398 aa).

The region spanning 10–208 (KPHVNVGTIG…ALDSHIPEPT (199 aa)) is the tr-type G domain. Residues 19–26 (GHIDHGKT) are G1. GTP is bound at residue 19–26 (GHIDHGKT). Thr26 is a Mg(2+) binding site. The G2 stretch occupies residues 60–64 (TKTVT). The segment at 83–86 (DCPG) is G3. GTP contacts are provided by residues 83–87 (DCPGH) and 138–141 (NKCD). Positions 138-141 (NKCD) are G4. The interval 176–178 (SSL) is G5.

Belongs to the TRAFAC class translation factor GTPase superfamily. Classic translation factor GTPase family. EF-Tu/EF-1A subfamily. As to quaternary structure, monomer.

The protein localises to the cytoplasm. It catalyses the reaction GTP + H2O = GDP + phosphate + H(+). Functionally, GTP hydrolase that promotes the GTP-dependent binding of aminoacyl-tRNA to the A-site of ribosomes during protein biosynthesis. The sequence is that of Elongation factor Tu from Rhodopirellula baltica (strain DSM 10527 / NCIMB 13988 / SH1).